A 238-amino-acid polypeptide reads, in one-letter code: Nicotinamide/nicotinic acid mononucleotide adenylyltransferase (238 aa).

NAD(+)-binding residues include serine 29 and phenylalanine 30. ATP-binding residues include histidine 37 and lysine 70. NAD(+) is bound by residues threonine 107, glycine 136, aspartate 138, tryptophan 149, arginine 168, and asparagine 199. 204–205 (SR) lines the ATP pocket.

Belongs to the eukaryotic NMN adenylyltransferase family. A divalent metal cation is required as a cofactor.

It is found in the nucleus. The enzyme catalyses beta-nicotinamide D-ribonucleotide + ATP + H(+) = diphosphate + NAD(+). The catalysed reaction is nicotinate beta-D-ribonucleotide + ATP + H(+) = deamido-NAD(+) + diphosphate. It participates in cofactor biosynthesis; NAD(+) biosynthesis; deamido-NAD(+) from nicotinate D-ribonucleotide: step 1/1. Its pathway is cofactor biosynthesis; NAD(+) biosynthesis; NAD(+) from nicotinamide D-ribonucleotide: step 1/1. Its function is as follows. Catalyzes the formation of NAD(+) from nicotinamide mononucleotide (NMN) and ATP. Can also use the deamidated form; nicotinic acid mononucleotide (NaMN) as substrate. The sequence is that of Nicotinamide/nicotinic acid mononucleotide adenylyltransferase (NMNAT) from Arabidopsis thaliana (Mouse-ear cress).